The following is a 256-amino-acid chain: Hemin import ATP-binding protein HmuV (256 aa).

The 237-residue stretch at 2-238 (ISAQNLVYSL…QALTMLYGAD (237 aa)) folds into the ABC transporter domain. 34–41 (GPNGAGKS) serves as a coordination point for ATP.

It belongs to the ABC transporter superfamily. Heme (hemin) importer (TC 3.A.1.14.5) family. The complex is composed of two ATP-binding proteins (HmuV), two transmembrane proteins (HmuU) and a solute-binding protein (HmuT).

Its subcellular location is the cell inner membrane. Part of the ABC transporter complex HmuTUV involved in hemin import. Responsible for energy coupling to the transport system. The protein is Hemin import ATP-binding protein HmuV of Shigella dysenteriae serotype 1 (strain Sd197).